The sequence spans 432 residues: Glutamate-1-semialdehyde 2,1-aminomutase (432 aa).

Lysine 265 is subject to N6-(pyridoxal phosphate)lysine.

This sequence belongs to the class-III pyridoxal-phosphate-dependent aminotransferase family. HemL subfamily. As to quaternary structure, homodimer. Pyridoxal 5'-phosphate is required as a cofactor.

Its subcellular location is the cytoplasm. It catalyses the reaction (S)-4-amino-5-oxopentanoate = 5-aminolevulinate. The protein operates within porphyrin-containing compound metabolism; protoporphyrin-IX biosynthesis; 5-aminolevulinate from L-glutamyl-tRNA(Glu): step 2/2. The polypeptide is Glutamate-1-semialdehyde 2,1-aminomutase (Histophilus somni (strain 129Pt) (Haemophilus somnus)).